Reading from the N-terminus, the 508-residue chain is UDP-N-acetylmuramoyl-L-alanyl-D-glutamate--L-lysine ligase (508 aa).

Residue Ser47 participates in UDP-N-acetyl-alpha-D-muramoyl-L-alanyl-D-glutamate binding. 124 to 130 (GTKGKTT) lines the ATP pocket. Residues 168-169 (TT), Ser195, and Arg203 each bind UDP-N-acetyl-alpha-D-muramoyl-L-alanyl-D-glutamate. Lys237 is subject to N6-carboxylysine. The L-lysine recognition motif signature appears at 425 to 428 (DDPA).

This sequence belongs to the MurCDEF family. MurE subfamily. Carboxylation is probably crucial for Mg(2+) binding and, consequently, for the gamma-phosphate positioning of ATP.

Its subcellular location is the cytoplasm. The enzyme catalyses UDP-N-acetyl-alpha-D-muramoyl-L-alanyl-D-glutamate + L-lysine + ATP = UDP-N-acetyl-alpha-D-muramoyl-L-alanyl-gamma-D-glutamyl-L-lysine + ADP + phosphate + H(+). The protein operates within cell wall biogenesis; peptidoglycan biosynthesis. Functionally, catalyzes the addition of L-lysine to the nucleotide precursor UDP-N-acetylmuramoyl-L-alanyl-D-glutamate (UMAG) in the biosynthesis of bacterial cell-wall peptidoglycan. This Enterococcus faecalis (strain ATCC 700802 / V583) protein is UDP-N-acetylmuramoyl-L-alanyl-D-glutamate--L-lysine ligase.